A 626-amino-acid chain; its full sequence is E3 ubiquitin-protein ligase HRD1 (626 aa).

Positions 1 to 15 are cleaved as a signal peptide; the sequence is MQLLLSSVCMALTSA. The Lumenal segment spans residues 16-38; it reads VIGFAYYQKQQFYPAVVYITKSN. Residues 39-59 traverse the membrane as a helical segment; sequence ASMGVIYIQFFVIVFMFGKLL. The Cytoplasmic segment spans residues 60-96; it reads SKIFLGTLRAAEFEHLLERFWYALTETCLAFTVFRDD. Residues 97–117 form a helical membrane-spanning segment; sequence FNPRFVALFTVLLFLKSFHWL. The Lumenal portion of the chain corresponds to 118-128; that stretch reads AEERVDFMERS. A helical membrane pass occupies residues 129–149; sequence PVLGWLFHIRVGSLLTVLGIL. Residues 150 to 167 are Cytoplasmic-facing; it reads DYVLLIHAYNSTLVRGPT. The chain crosses the membrane as a helical span at residues 168 to 188; it reads VQLVFGFEYAILLTVIASTAI. The Lumenal portion of the chain corresponds to 189 to 222; that stretch reads KYVLHAAEMRTDTPWENKAVFLLYTELVIGLIKV. The helical transmembrane segment at 223–243 threads the bilayer; the sequence is VLYILFVVIMAKIYALPMFVF. Residues 234 to 268 form an interaction with p53/TP53 region; sequence KIYALPMFVFRPMFFTIRNFRKALNDVIMSRRAIR. Residues 244-626 are Cytoplasmic-facing; the sequence is RPMFFTIRNF…AATNERTTAE (383 aa). The RING-type; atypical zinc-finger motif lies at 289–328; the sequence is CIICREDMVNHSKKLPCGHIFHTTCLRSWFQRQQTCPTCR. Positions 569 to 600 are disordered; sequence DADEDDIPSTATEAVSIPNSDADFEENSSELG. Over residues 577–587 the composition is skewed to polar residues; that stretch reads STATEAVSIPN.

It belongs to the HRD1 family. In terms of assembly, homodimer. Interacts with p53. May interact with Septin2.

The protein resides in the endoplasmic reticulum membrane. It catalyses the reaction S-ubiquitinyl-[E2 ubiquitin-conjugating enzyme]-L-cysteine + [acceptor protein]-L-lysine = [E2 ubiquitin-conjugating enzyme]-L-cysteine + N(6)-ubiquitinyl-[acceptor protein]-L-lysine.. The protein operates within protein modification; protein ubiquitination. In terms of biological role, acts as an E3 ubiquitin-protein ligase which accepts ubiquitin specifically from endoplasmic reticulum-associated UBC7 E2 ligase and transfers it to substrates, promoting their degradation. Component of the endoplasmic reticulum quality control (ERQC) system also called ER-associated degradation (ERAD) involved in ubiquitin-dependent degradation of misfolded endoplasmic reticulum proteins. Also promotes the degradation of normal but naturally short-lived proteins. Protects cells from ER stress-induced apoptosis. Sequesters p53 in the cytoplasm and promotes its degradation, thereby negatively regulating its biological function in transcription, cell cycle regulation and apoptosis. This chain is E3 ubiquitin-protein ligase HRD1 (sip3), found in Drosophila melanogaster (Fruit fly).